Reading from the N-terminus, the 1236-residue chain is Chitinase-like protein PB1E7.04c (1236 aa).

The N-terminal stretch at 1–19 (MRLISSLLLLVYSARLALS) is a signal peptide. N-linked (GlcNAc...) asparagine glycans are attached at residues Asn21, Asn24, Asn54, Asn123, Asn225, Asn237, Asn255, Asn267, Asn277, Asn288, and Asn309. The GH18 domain occupies 26–325 (TAVLGYWGSN…EAIHKILDTK (300 aa)). 3 disordered regions span residues 326–367 (SKHS…TSSA), 449–497 (VSSI…QSTL), and 584–625 (TSSP…STIL). Positions 339-351 (QGLESTSSIALNP) are enriched in polar residues. A compositionally biased stretch (low complexity) spans 352 to 367 (TSSISSTSSSSSTSSA). Residues Asn715, Asn737, Asn768, Asn786, and Asn813 are each glycosylated (N-linked (GlcNAc...) asparagine). Disordered stretches follow at residues 804-836 (ISTS…LAAN), 868-927 (TTAL…TSSS), 946-979 (TPTS…SSIA), and 1125-1159 (AASG…TPSN). Over residues 810–821 (NEYNTSFHAPTV) the composition is skewed to polar residues. The span at 822–832 (SSTTSSSSTTS) shows a compositional bias: low complexity. The segment covering 1125–1156 (AASGSSTVTSSATASSSSSAATTADSSVTTDT) has biased composition (low complexity).

It belongs to the glycosyl hydrolase 18 family. Chitinase class III subfamily.

It is found in the secreted. This Schizosaccharomyces pombe (strain 972 / ATCC 24843) (Fission yeast) protein is Chitinase-like protein PB1E7.04c.